Reading from the N-terminus, the 154-residue chain is Ribosomal RNA-processing protein 14-N (154 aa).

Residues 36–154 (WKQKKSTLEE…KHKASPRAGF (119 aa)) are disordered. Position 80 is a phosphoserine (S80). Phosphothreonine is present on T83. Over residues 105 to 133 (QDLREKRKAGDLNQKRQNKRPVENEKDSQ) the composition is skewed to basic and acidic residues. Residues 140 to 154 (KVQKKKHKASPRAGF) show a composition bias toward basic residues.

It belongs to the SURF6 family.

It is found in the nucleus. The protein resides in the nucleolus. Involved in ribosome biogenesis and cell polarity. Required for the synthesis of both 40S and 60S ribosomal subunits and may also play some direct role in correct positioning of the mitotic spindle during mitosis. The polypeptide is Ribosomal RNA-processing protein 14-N (rrp14n) (Schizosaccharomyces pombe (strain 972 / ATCC 24843) (Fission yeast)).